We begin with the raw amino-acid sequence, 968 residues long: RNA polymerase-associated protein RapA (968 aa).

Residues 164–334 (DVGRRHAPRV…FARLRLLDPN (171 aa)) enclose the Helicase ATP-binding domain. 177–184 (DEVGLGKT) contacts ATP. The DEAH box signature appears at 280 to 283 (DEAH). The Helicase C-terminal domain occupies 490-685 (RVEWLMGYLT…ALKAQLEQGR (196 aa)).

This sequence belongs to the SNF2/RAD54 helicase family. RapA subfamily. In terms of assembly, interacts with the RNAP. Has a higher affinity for the core RNAP than for the holoenzyme. Its ATPase activity is stimulated by binding to RNAP.

Functionally, transcription regulator that activates transcription by stimulating RNA polymerase (RNAP) recycling in case of stress conditions such as supercoiled DNA or high salt concentrations. Probably acts by releasing the RNAP, when it is trapped or immobilized on tightly supercoiled DNA. Does not activate transcription on linear DNA. Probably not involved in DNA repair. The chain is RNA polymerase-associated protein RapA from Salmonella choleraesuis (strain SC-B67).